Consider the following 1794-residue polypeptide: Protein TIC 214 (1794 aa).

A run of 6 helical transmembrane segments spans residues 19–39 (IINS…FSIG), 68–88 (FIAG…HLAL), 91–111 (PHTI…WNNH), 133–153 (VFLN…SSML), 176–196 (VGWL…LVWI), and 227–247 (IFSI…PSPI).

Belongs to the TIC214 family. As to quaternary structure, part of the Tic complex.

Its subcellular location is the plastid. The protein resides in the chloroplast inner membrane. Involved in protein precursor import into chloroplasts. May be part of an intermediate translocation complex acting as a protein-conducting channel at the inner envelope. In Olimarabidopsis pumila (Dwarf rocket), this protein is Protein TIC 214.